The chain runs to 282 residues: Putative polysaccharide deacetylase YheN (282 aa).

The helical transmembrane segment at 15–35 (LAFKFASLAVLCVLLLLMVIL) threads the bilayer. A NodB homology domain is found at 85–271 (KTVYLTFDDG…KLKEKGYSFG (187 aa)).

It belongs to the polysaccharide deacetylase family.

Its subcellular location is the cell membrane. The sequence is that of Putative polysaccharide deacetylase YheN (yheN) from Bacillus subtilis (strain 168).